The chain runs to 520 residues: Eukaryotic translation initiation factor 3 subunit L (520 aa).

In terms of domain architecture, PCI spans 278–478 (FATYYYVGIC…ELDIALENDL (201 aa)).

Belongs to the eIF-3 subunit L family. As to quaternary structure, component of the eukaryotic translation initiation factor 3 (eIF-3) complex.

The protein localises to the cytoplasm. In terms of biological role, component of the eukaryotic translation initiation factor 3 (eIF-3) complex, which is involved in protein synthesis of a specialized repertoire of mRNAs and, together with other initiation factors, stimulates binding of mRNA and methionyl-tRNAi to the 40S ribosome. The eIF-3 complex specifically targets and initiates translation of a subset of mRNAs involved in cell proliferation. The protein is Eukaryotic translation initiation factor 3 subunit L of Yarrowia lipolytica (strain CLIB 122 / E 150) (Yeast).